We begin with the raw amino-acid sequence, 256 residues long: 5'-nucleotidase SurE (256 aa).

A divalent metal cation is bound by residues Asp13, Asp14, Ser44, and Asn101.

Belongs to the SurE nucleotidase family. A divalent metal cation serves as cofactor.

Its subcellular location is the cytoplasm. The enzyme catalyses a ribonucleoside 5'-phosphate + H2O = a ribonucleoside + phosphate. In terms of biological role, nucleotidase that shows phosphatase activity on nucleoside 5'-monophosphates. The polypeptide is 5'-nucleotidase SurE (Porphyromonas gingivalis (strain ATCC 33277 / DSM 20709 / CIP 103683 / JCM 12257 / NCTC 11834 / 2561)).